A 145-amino-acid polypeptide reads, in one-letter code: MNTSLSWFEQLDVLLNATDGNVVRNKQWLYPLGVSTELIGLCICFFCSSGCIFLGSPPQNSTAVTPAVLWEESEIMQKELKLLQYQLSQHQELLLKQLAEGRQAQVGSWKIPRGAPFLTWSPASFSSMPRVLSKRTYSFGAPKCS.

Residues 38–54 form a helical membrane-spanning segment; that stretch reads LIGLCICFFCSSGCIFL.

It localises to the membrane. This Homo sapiens (Human) protein is Transmembrane protein CCDC163.